The primary structure comprises 196 residues: ATP-dependent Clp protease proteolytic subunit (196 aa).

Catalysis depends on Ser-96, which acts as the Nucleophile. His-121 is a catalytic residue.

It belongs to the peptidase S14 family. As to quaternary structure, fourteen ClpP subunits assemble into 2 heptameric rings which stack back to back to give a disk-like structure with a central cavity, resembling the structure of eukaryotic proteasomes.

It localises to the cytoplasm. It catalyses the reaction Hydrolysis of proteins to small peptides in the presence of ATP and magnesium. alpha-casein is the usual test substrate. In the absence of ATP, only oligopeptides shorter than five residues are hydrolyzed (such as succinyl-Leu-Tyr-|-NHMec, and Leu-Tyr-Leu-|-Tyr-Trp, in which cleavage of the -Tyr-|-Leu- and -Tyr-|-Trp bonds also occurs).. In terms of biological role, cleaves peptides in various proteins in a process that requires ATP hydrolysis. Has a chymotrypsin-like activity. Plays a major role in the degradation of misfolded proteins. This is ATP-dependent Clp protease proteolytic subunit from Streptococcus pneumoniae (strain ATCC 700669 / Spain 23F-1).